A 648-amino-acid polypeptide reads, in one-letter code: 5-aminolevulinate synthase, mitochondrial (648 aa).

Residues 1-26 (MEALLQQSRAMCPFLKRSSPNTLRSL) constitute a mitochondrion transit peptide. The segment at 69–109 (KRFTSSAAGVPGAGAGTPKPTRGSPGKRALHSTGGNGANMS) is disordered. Arg170, Ser283, and Lys302 together coordinate substrate. Ser335, His363, and Thr409 together coordinate pyridoxal 5'-phosphate. Lys412 is an active-site residue. Lys412 bears the N6-(pyridoxal phosphate)lysine mark. Pyridoxal 5'-phosphate-binding residues include Thr441 and Thr442. Thr527 lines the substrate pocket.

It belongs to the class-II pyridoxal-phosphate-dependent aminotransferase family. As to quaternary structure, homodimer. The cofactor is pyridoxal 5'-phosphate.

The protein localises to the mitochondrion matrix. It carries out the reaction succinyl-CoA + glycine + H(+) = 5-aminolevulinate + CO2 + CoA. The protein operates within porphyrin-containing compound metabolism; protoporphyrin-IX biosynthesis; 5-aminolevulinate from glycine: step 1/1. In terms of biological role, catalyzes the synthesis of 5-aminolevulinate (ALA) from succinyl-CoA and glycine, the first and rate-limiting step in heme biosynthesis. This Emericella nidulans (strain FGSC A4 / ATCC 38163 / CBS 112.46 / NRRL 194 / M139) (Aspergillus nidulans) protein is 5-aminolevulinate synthase, mitochondrial (hemA).